Reading from the N-terminus, the 757-residue chain is Centrosomal protein of 68 kDa (757 aa).

Composition is skewed to basic and acidic residues over residues 1–17 and 86–96; these read MALGEEKAEAEASEDTK and ANREPVAERSE. Disordered stretches follow at residues 1–47, 67–158, 192–259, 311–480, 509–551, and 597–618; these read MALG…RLEA, WIGT…PSLA, QPSS…GGDA, PGPQ…ESDD, PTGD…SGDP, and LDRWPFSDPDVEGQLPRKGGEQ. The segment covering 125-144 has biased composition (polar residues); sequence LSSSEEFPQTLSLPRTTTIC. Composition is skewed to low complexity over residues 192 to 206 and 224 to 240; these read QPSSCSISASSTGSS and VSSSLEPVVPQEPSSVV. At Ser332 the chain carries Phosphoserine; by PLK1. Polar residues predominate over residues 339–355; the sequence is FSVSPASTLKSPTNVSP. 2 stretches are compositionally biased toward basic and acidic residues: residues 405 to 432 and 439 to 456; these read GSRDARWERREPALRGAKDRLTIGKHLD and RTRDRGWPSPRPEREKRT. The segment covering 457-467 has biased composition (polar residues); that stretch reads SQSARRPTCTE. Residues Ser472 and Ser478 each carry the phosphoserine modification. Low complexity predominate over residues 524-543; the sequence is SDGPASFPSSSSQSQLPPGA.

In terms of assembly, interacts with CNTLN; the interaction recruits CEP68 to the centrosome. Interacts with the SCF(FBXW11) complex which contains SKP1, CUL1 and FBXW11; the interaction is probably mediated by FBXW11 and the complex also contains CDK5RAP2 and PCNT. Also interacts with F-box protein BTRC. Interacts with serine/threonine-protein kinase PLK1; the interaction leads to phosphorylation of CEP68 and its subsequent degradation. Interacts with NEK2; the interaction leads to phosphorylation of CEP68. In terms of processing, phosphorylation by PLK1 is required for binding to BTRC in prometaphase. Phosphorylated directly or indirectly by NEK2. NEK2-mediated phosphorylation promotes CEP68 dissociation from the centrosome and its degradation at the onset of mitosis. Post-translationally, ubiquitinated and targeted for proteasomal degradation in early mitosis by the SCF(BTRC) and/or SCF(FBXW11) E3 ubiquitin-protein ligase complexes. Degradation is complete by prometaphase and is required for removal of CDK5RAP2 from the peripheral pericentriolar material and subsequent centriole separation.

It localises to the cytoplasm. The protein resides in the cytoskeleton. It is found in the microtubule organizing center. Its subcellular location is the centrosome. Functionally, involved in maintenance of centrosome cohesion, probably as part of a linker structure which prevents centrosome splitting. Required for localization of CDK5RAP2 to the centrosome during interphase. Contributes to CROCC/rootletin filament formation. The protein is Centrosomal protein of 68 kDa (CEP68) of Homo sapiens (Human).